We begin with the raw amino-acid sequence, 106 residues long: Large ribosomal subunit protein uL23 (106 aa).

The protein belongs to the universal ribosomal protein uL23 family. As to quaternary structure, part of the 50S ribosomal subunit. Contacts protein L29, and trigger factor when it is bound to the ribosome.

In terms of biological role, one of the early assembly proteins it binds 23S rRNA. One of the proteins that surrounds the polypeptide exit tunnel on the outside of the ribosome. Forms the main docking site for trigger factor binding to the ribosome. In Neisseria gonorrhoeae (strain ATCC 700825 / FA 1090), this protein is Large ribosomal subunit protein uL23.